A 298-amino-acid polypeptide reads, in one-letter code: MDLTGRRAVVTGGASGLGAETVRALAAAGAEVTVATRRPLSAEPLVQELAAAGGAGRVTAEALDLSDPASVESFARAWRGPLDILVANAGIMALPTRTLAPNGWEMQLATNYLGHFALATGLHAALRDAGSARIVVVSSGAHLDAPFDFEDAHFARRPYDPWVAYGQSKAADVLFTVGARRWAADGITVNALNPGYILTRLQRHVDDETMRAFGVMDDQGNVKPLPYYKTPEQGAATSVLLAASPLLKGVTGRYFEDNQEARTVQGQEDQPGGVAAHALDPEAADRLWEYGTDALRAA.

9–33 (VVTGGASGLGAETVRALAAAGAEVT) is a binding site for NAD(+). Substrate is bound at residue Ser-139. Tyr-165 serves as the catalytic Proton acceptor.

This sequence belongs to the short-chain dehydrogenases/reductases (SDR) family.

The polypeptide is Probable oxidoreductase (Streptomyces antibioticus).